Reading from the N-terminus, the 353-residue chain is Photosystem II protein D1 (353 aa).

Residue Thr-2 is modified to N-acetylthreonine. The residue at position 2 (Thr-2) is a Phosphothreonine. 3 consecutive transmembrane segments (helical) span residues 29–46, 118–133, and 142–156; these read YIGW…TATS, HFLL…EWEL, and WIAV…AATA. His-118 contributes to the chlorophyll a binding site. Tyr-126 is a pheophytin a binding site. Asp-170 and Glu-189 together coordinate [CaMn4O5] cluster. Residues 197-218 form a helical membrane-spanning segment; sequence FHMLGVAGVFGGSLFSAMHGSL. Residue His-198 participates in chlorophyll a binding. A quinone is bound by residues His-215 and 264-265; that span reads SF. His-215 contributes to the Fe cation binding site. His-272 contributes to the Fe cation binding site. A helical transmembrane segment spans residues 274–288; that stretch reads FLAAWPVVGIWFTAL. Residues His-332, Glu-333, Asp-342, and Ala-344 each coordinate [CaMn4O5] cluster. The propeptide occupies 345-353; the sequence is AVEAPSTNG.

This sequence belongs to the reaction center PufL/M/PsbA/D family. In terms of assembly, PSII is composed of 1 copy each of membrane proteins PsbA, PsbB, PsbC, PsbD, PsbE, PsbF, PsbH, PsbI, PsbJ, PsbK, PsbL, PsbM, PsbT, PsbX, PsbY, PsbZ, Psb30/Ycf12, at least 3 peripheral proteins of the oxygen-evolving complex and a large number of cofactors. It forms dimeric complexes. The cofactor is The D1/D2 heterodimer binds P680, chlorophylls that are the primary electron donor of PSII, and subsequent electron acceptors. It shares a non-heme iron and each subunit binds pheophytin, quinone, additional chlorophylls, carotenoids and lipids. D1 provides most of the ligands for the Mn4-Ca-O5 cluster of the oxygen-evolving complex (OEC). There is also a Cl(-1) ion associated with D1 and D2, which is required for oxygen evolution. The PSII complex binds additional chlorophylls, carotenoids and specific lipids.. Post-translationally, tyr-161 forms a radical intermediate that is referred to as redox-active TyrZ, YZ or Y-Z. C-terminally processed by CTPA; processing is essential to allow assembly of the oxygen-evolving complex and thus photosynthetic growth.

Its subcellular location is the plastid. The protein localises to the chloroplast thylakoid membrane. The catalysed reaction is 2 a plastoquinone + 4 hnu + 2 H2O = 2 a plastoquinol + O2. In terms of biological role, photosystem II (PSII) is a light-driven water:plastoquinone oxidoreductase that uses light energy to abstract electrons from H(2)O, generating O(2) and a proton gradient subsequently used for ATP formation. It consists of a core antenna complex that captures photons, and an electron transfer chain that converts photonic excitation into a charge separation. The D1/D2 (PsbA/PsbD) reaction center heterodimer binds P680, the primary electron donor of PSII as well as several subsequent electron acceptors. The chain is Photosystem II protein D1 from Nymphaea alba (White water-lily).